An 842-amino-acid chain; its full sequence is Elongation factor 2 (842 aa).

A tr-type G domain is found at 17–253; the sequence is TNVRNMSVIA…LWGDSYFNPK (237 aa). Residues 26–33, 158–161, and 213–215 each bind GTP; these read AHVDHGKS, NKVD, and SGL. Position 699 is a diphthamide (H699).

This sequence belongs to the TRAFAC class translation factor GTPase superfamily. Classic translation factor GTPase family. EF-G/EF-2 subfamily.

It is found in the cytoplasm. It carries out the reaction GTP + H2O = GDP + phosphate + H(+). Its function is as follows. Catalyzes the GTP-dependent ribosomal translocation step during translation elongation. During this step, the ribosome changes from the pre-translocational (PRE) to the post-translocational (POST) state as the newly formed A-site-bound peptidyl-tRNA and P-site-bound deacylated tRNA move to the P and E sites, respectively. Catalyzes the coordinated movement of the two tRNA molecules, the mRNA and conformational changes in the ribosome. The sequence is that of Elongation factor 2 (EFT1) from Eremothecium gossypii (strain ATCC 10895 / CBS 109.51 / FGSC 9923 / NRRL Y-1056) (Yeast).